Reading from the N-terminus, the 223-residue chain is Type III pantothenate kinase (223 aa).

17–24 (DIGNTRIH) is a binding site for ATP. Substrate-binding positions include tyrosine 81 and 85–88 (GIDR). Aspartate 87 serves as the catalytic Proton acceptor. Aspartate 102 contributes to the K(+) binding site. Serine 105 is an ATP binding site. Threonine 157 is a binding site for substrate.

Belongs to the type III pantothenate kinase family. As to quaternary structure, homodimer. NH4(+) is required as a cofactor. Requires K(+) as cofactor.

Its subcellular location is the cytoplasm. It catalyses the reaction (R)-pantothenate + ATP = (R)-4'-phosphopantothenate + ADP + H(+). It functions in the pathway cofactor biosynthesis; coenzyme A biosynthesis; CoA from (R)-pantothenate: step 1/5. In terms of biological role, catalyzes the phosphorylation of pantothenate (Pan), the first step in CoA biosynthesis. The polypeptide is Type III pantothenate kinase (Helicobacter pylori (strain J99 / ATCC 700824) (Campylobacter pylori J99)).